Consider the following 210-residue polypeptide: UPF0301 protein OCAR_7326/OCA5_c07920 (210 aa).

The protein belongs to the UPF0301 (AlgH) family.

The polypeptide is UPF0301 protein OCAR_7326/OCA5_c07920 (Afipia carboxidovorans (strain ATCC 49405 / DSM 1227 / KCTC 32145 / OM5) (Oligotropha carboxidovorans)).